The chain runs to 371 residues: Barbiturase 1 (371 aa).

Positions 1–103 (MPDAIEVRKV…TIFATVPPED (103 aa)) are RU A. Residues R53 and 82-83 (SG) each bind substrate. An RU B region spans residues 115–250 (RLTVGFAMSE…AQVVVVGNAP (136 aa)). K165 is a catalytic residue. Residues N197 and 233–234 (SS) each bind substrate. S233 acts as the Nucleophile in catalysis. An RU C region spans residues 256–371 (YRIGHSVMKD…GPVAAIVDLG (116 aa)). Residue E304 participates in Mg(2+) binding. Residues K331 and 350–351 (SV) each bind substrate. Mg(2+) is bound by residues A353, Q356, G357, P358, and G361.

Belongs to the cyclic amide hydrolase (CyAH) family. As to quaternary structure, homotetramer.

It carries out the reaction barbiturate + H2O = 3-oxo-3-ureidopropanoate. The protein operates within pyrimidine metabolism; uracil degradation via oxidative pathway; malonate and urea from uracil: step 2/3. Its activity is regulated as follows. Inhibited by cyanuric acid. Its function is as follows. Responsible for the hydrolysis of barbituric acid (2,4,6-trihydroxy-1,3-pyrimidine), an intermediate in the oxidative catabolism of pyrimidines. Catalyzes the hydrolytic opening of the pyrimidine ring of barbituric acid to yield ureidomalonic acid. The protein is Barbiturase 1 of Nocardioides sp. (strain ATCC BAA-499 / JS614).